Here is a 988-residue protein sequence, read N- to C-terminus: MGSVKRKSVEESSDSAPPQKVQREDDSTQIINEELVGCVHDVSFPENYVPLAPSVHNKPPAKDFPFTLDSFQSEAIKCLDNGESVMVSAHTSAGKTVVASYAIAMSLKENQRVIYTSPIKALSNQKYRDFKEEFSDVGLMTGDVTIDPNASCLVMTTEILRSMQYKGSEIMREVAWIIFDEVHYMRDSERGVVWEESIVMAPKNSRFVFLSATVPNAKEFADWVAKVHQQPCHIVYTDYRPTPLQHYVFPAGGNGLYLVVDEKSKFHEDSFQKSLNALVPTNESDKKRDNGKFQKGLVIGKLGEESDIFKLVKMIIQRQYDPVILFSFSKKECEALAMQMSKMVLNSDDEKDAVETIFASAIDMLSDDDKKLPQVSNILPILKRGIGVHHSGLLPILKEVIEILFQEGLIKCLFATETFSIGLNMPAKTVVFTNVRKFDGDKFRWLSSGEYIQMSGRAGRRGIDKRGICILMVDEKMEPAVAKSMLKGSADSLNSAFHLSYNMLLNQLRCEEGDPENLLRNSFFQFQADRAIPDLEKQIKSLEEERDSLVIEEEESLKNYYNLILQYKSLKKDIREIVFTPKYCLPFLLPNRAVCLDCTNDDEEPQSFSIEDQDTWGVIMKFNKVKSLSEDDDSRRPEDANYTVDVLTRCMVSKDGVGKKKVKAVPIKERGEPVVVTVPLSQIKSLSSAIMNIPKDLVPLEARENALKKVSELLSRHPDGIPLDPEVDMKIKSSSYKKTVRRLEALENLFEKHKIAKSPLITEKLKVLQMKEELIAKIKSLKKTVRSSTALAFKDELKARKRVLRRLGYITSDNVVELKGKVACEISSAEELTLTELMFSGIFKDAKVEELVSLLSCFVWRERLPDAAKPREELDLLFIQLQDTARRVAEVQLDCKVEIDVESFVQSFRPDIMEAVYAWAKGSKFYEVMEIARVFEGSLIRAIRRMEEVLQQLIVAAKSIGETQLEAKLEEAVSKIKRDIVFAASLYL.

The interval methionine 1–serine 27 is disordered. Positions isoleucine 76–cysteine 232 constitute a Helicase ATP-binding domain. Residue alanine 89–threonine 96 participates in ATP binding. A DEVH box motif is present at residues aspartate 180–histidine 183. A Helicase C-terminal domain is found at aspartate 307 to arginine 509.

Belongs to the DExH box helicase family. SKI2 subfamily. In terms of tissue distribution, ubiquitous but preferentially expressed in active tissues.

The protein resides in the nucleus. It localises to the nucleolus. The catalysed reaction is ATP + H2O = ADP + phosphate + H(+). Its function is as follows. ATP-dependent RNA helicase that associates with the RNA exosome complex. Required for proper rRNA biogenesis and development. Involved in the 3'-processing of the 7S pre-RNA to the mature 5.8S rRNA and also in the removal of rRNA maturation by-products. In Arabidopsis thaliana (Mouse-ear cress), this protein is DExH-box ATP-dependent RNA helicase DExH9.